A 221-amino-acid polypeptide reads, in one-letter code: Protein myomaker (221 aa).

At 1–3 (MGT) the chain is on the extracellular side. Residues 4–24 (LVAKLLLPTLSSLAFLPTVSI) traverse the membrane as a helical segment. Over 25–34 (AAKRRFHMEA) the chain is Cytoplasmic. A helical transmembrane segment spans residues 35–55 (MVYLFTLFFVALHHACNGPGL). Over 56-64 (SVLCFMRHD) the chain is Extracellular. Residues 65-85 (ILEYFSVYGTALSMWVSLMAL) form a helical membrane-spanning segment. The Cytoplasmic segment spans residues 86–92 (ADFDEPK). The chain crosses the membrane as a helical span at residues 93-110 (RSTFVMFGVLTIAVRIYH). The Extracellular segment spans residues 111–113 (DRW). The helical transmembrane segment at 114–134 (GYGVYSGPIGTAILIIAAKWL) threads the bilayer. The Cytoplasmic segment spans residues 135-153 (QKMKEKKGLYPDKSVYTQQ). The helical transmembrane segment at 154–174 (IGPGLCFGALALMLRFFFEDW) threads the bilayer. Residue aspartate 175 is a topological domain, extracellular. Residues 176–196 (YTYVHSFYHCALAMSFVLLLP) traverse the membrane as a helical segment. Topologically, residues 197 to 221 (KVNKKAGSPGTPAKLDCSTLCCACV) are cytoplasmic. Residues cysteine 217 and cysteine 218 are each lipidated (S-palmitoyl cysteine).

The protein belongs to the TMEM8 family. In terms of assembly, interacts with MYMX. Post-translationally, palmitoylated at the C-terminus; palmitoylation promotes localization to the Golgi apparatus.

It localises to the cell membrane. The protein localises to the golgi apparatus membrane. Myoblast-specific protein that mediates myoblast fusion, an essential step for the formation of multi-nucleated muscle fibers. Actively participates in the membrane fusion reaction by mediating the mixing of cell membrane lipids (hemifusion) upstream of MYMX. Acts independently of MYMX. Involved in skeletal muscle regeneration in response to injury by mediating the fusion of satellite cells, a population of muscle stem cells, with injured myofibers. Also involved in skeletal muscle hypertrophy, probably by mediating the fusion of satellite cells with myofibers. In Homo sapiens (Human), this protein is Protein myomaker.